Reading from the N-terminus, the 187-residue chain is Elongation factor P (187 aa).

The protein belongs to the elongation factor P family.

It is found in the cytoplasm. It participates in protein biosynthesis; polypeptide chain elongation. Functionally, involved in peptide bond synthesis. Stimulates efficient translation and peptide-bond synthesis on native or reconstituted 70S ribosomes in vitro. Probably functions indirectly by altering the affinity of the ribosome for aminoacyl-tRNA, thus increasing their reactivity as acceptors for peptidyl transferase. This is Elongation factor P from Synechococcus sp. (strain CC9605).